We begin with the raw amino-acid sequence, 109 residues long: Protein phosphatase 1 regulatory subunit 1C (109 aa).

The tract at residues 25–109 (AEQIRKRRPT…TNEREEQRDH (85 aa)) is disordered. Residues 45–54 (NPPEIDDKRV) show a composition bias toward basic and acidic residues. Polar residues predominate over residues 55–75 (PNTQGELQNASPKQRKQSVYT). A compositionally biased stretch (basic and acidic residues) spans 100–109 (TNEREEQRDH).

It belongs to the protein phosphatase inhibitor 1 family.

Its subcellular location is the cytoplasm. In terms of biological role, may increase cell susceptibility to TNF-induced apoptosis. The protein is Protein phosphatase 1 regulatory subunit 1C (PPP1R1C) of Pongo abelii (Sumatran orangutan).